A 156-amino-acid chain; its full sequence is Small ribosomal subunit protein uS7 (156 aa).

Belongs to the universal ribosomal protein uS7 family. In terms of assembly, part of the 30S ribosomal subunit. Contacts proteins S9 and S11.

Its function is as follows. One of the primary rRNA binding proteins, it binds directly to 16S rRNA where it nucleates assembly of the head domain of the 30S subunit. Is located at the subunit interface close to the decoding center, probably blocks exit of the E-site tRNA. In Syntrophomonas wolfei subsp. wolfei (strain DSM 2245B / Goettingen), this protein is Small ribosomal subunit protein uS7.